The primary structure comprises 251 residues: DNA repair protein RecO (251 aa).

This sequence belongs to the RecO family.

In terms of biological role, involved in DNA repair and RecF pathway recombination. The protein is DNA repair protein RecO of Streptococcus mutans serotype c (strain ATCC 700610 / UA159).